A 264-amino-acid polypeptide reads, in one-letter code: uncharacterized protein (264 aa).

A helical transmembrane segment spans residues T182 to L198.

The protein to E.coli YjiC.

The protein resides in the membrane. This is an uncharacterized protein from Escherichia coli (strain K12).